A 287-amino-acid chain; its full sequence is Lipoyl synthase (287 aa).

[4Fe-4S] cluster-binding residues include C34, C39, C45, C60, C64, C67, and S273. The Radical SAM core domain maps to 46–262; the sequence is WNKRHATVMI…KYIAYSKGFL (217 aa).

This sequence belongs to the radical SAM superfamily. Lipoyl synthase family. The cofactor is [4Fe-4S] cluster.

It localises to the cytoplasm. The catalysed reaction is [[Fe-S] cluster scaffold protein carrying a second [4Fe-4S](2+) cluster] + N(6)-octanoyl-L-lysyl-[protein] + 2 oxidized [2Fe-2S]-[ferredoxin] + 2 S-adenosyl-L-methionine + 4 H(+) = [[Fe-S] cluster scaffold protein] + N(6)-[(R)-dihydrolipoyl]-L-lysyl-[protein] + 4 Fe(3+) + 2 hydrogen sulfide + 2 5'-deoxyadenosine + 2 L-methionine + 2 reduced [2Fe-2S]-[ferredoxin]. The protein operates within protein modification; protein lipoylation via endogenous pathway; protein N(6)-(lipoyl)lysine from octanoyl-[acyl-carrier-protein]: step 2/2. Its function is as follows. Catalyzes the radical-mediated insertion of two sulfur atoms into the C-6 and C-8 positions of the octanoyl moiety bound to the lipoyl domains of lipoate-dependent enzymes, thereby converting the octanoylated domains into lipoylated derivatives. This chain is Lipoyl synthase, found in Wolbachia sp. subsp. Drosophila simulans (strain wRi).